Reading from the N-terminus, the 105-residue chain is Small ribosomal subunit protein uS10 (105 aa).

This sequence belongs to the universal ribosomal protein uS10 family. Part of the 30S ribosomal subunit.

Involved in the binding of tRNA to the ribosomes. The sequence is that of Small ribosomal subunit protein uS10 from Rickettsia massiliae (strain Mtu5).